The following is a 238-amino-acid chain: Ribonuclease PH (238 aa).

Residues arginine 86 and 124–126 contribute to the phosphate site; that span reads GTR.

Belongs to the RNase PH family. As to quaternary structure, homodimer. Has a tendency to aggregate into multimers. Requires Mg(2+) as cofactor.

It catalyses the reaction tRNA(n+1) + phosphate = tRNA(n) + a ribonucleoside 5'-diphosphate. Its function is as follows. Phosphorolytic exoribonuclease that plays an important role in tRNA 3'-end maturation; has no activity on a tRNA precursor with a 3'-terminal phosphate group. In vitro is freely reversible, adds nucleotides to the ends of RNA molecules by using nucleoside diphosphates as substrates, but this may not be physiologically important. Probably plays a role in initiation of 16S rRNA degradation (leading to ribosome degradation) during starvation. This is Ribonuclease PH from Escherichia coli (strain K12 / MC4100 / BW2952).